We begin with the raw amino-acid sequence, 375 residues long: Chaperone protein DnaJ (375 aa).

Residues 6-71 (DYYEVLGVPK…EKRRQYDQFG (66 aa)) form the J domain. A CR-type zinc finger spans residues 138–220 (GTTKKIDVTL…CYGTGYISSK (83 aa)). Residues C151, C154, C168, C171, C194, C197, C208, and C211 each coordinate Zn(2+). CXXCXGXG motif repeat units follow at residues 151–158 (CSSCHGTG), 168–175 (CSKCGGRG), 194–201 (CPDCHGTG), and 208–215 (CPDCYGTG).

This sequence belongs to the DnaJ family. As to quaternary structure, homodimer. Requires Zn(2+) as cofactor.

It localises to the cytoplasm. Its function is as follows. Participates actively in the response to hyperosmotic and heat shock by preventing the aggregation of stress-denatured proteins and by disaggregating proteins, also in an autonomous, DnaK-independent fashion. Unfolded proteins bind initially to DnaJ; upon interaction with the DnaJ-bound protein, DnaK hydrolyzes its bound ATP, resulting in the formation of a stable complex. GrpE releases ADP from DnaK; ATP binding to DnaK triggers the release of the substrate protein, thus completing the reaction cycle. Several rounds of ATP-dependent interactions between DnaJ, DnaK and GrpE are required for fully efficient folding. Also involved, together with DnaK and GrpE, in the DNA replication of plasmids through activation of initiation proteins. The chain is Chaperone protein DnaJ from Lachnospira eligens (strain ATCC 27750 / DSM 3376 / VPI C15-48 / C15-B4) (Eubacterium eligens).